A 355-amino-acid polypeptide reads, in one-letter code: Syntaxin-5 (355 aa).

Topologically, residues 1 to 333 (MIPRKRYGSK…KYFQSVTSNR (333 aa)) are cytoplasmic. Positions 245–247 (IDM) match the IxM motif; signal for cargo packaging into COPII-coated vesicles motif. The region spanning 263–325 (DSYIQSRADT…EAAHSEILKY (63 aa)) is the t-SNARE coiled-coil homology domain. Positions 287-318 (FQQLAHMVKEQEETIQRIDENVLGAQLDVEAA) form a coiled coil. Residues 334–354 (WLMVKIFLILIVFFIIFVVFL) form a helical; Anchor for type IV membrane protein membrane-spanning segment. A topological domain (vesicular) is located at residue A355.

Belongs to the syntaxin family. As to quaternary structure, part of a ternary complex containing STX5A, NSFL1C and VCP. Part of a unique SNARE complex composed of the Golgi SNAREs GOSR1, GOSR2 and YKT6. This complex also includes VTI1A. Component of a SNARE complex consisting of STX5, YKT6, GOSR1 and BET1L. Interacts with BET1L. Interacts with BET1. Interacts with COG4. Interacts with GM130/GOLGA2. Interacts (via IxM motif) with SEC24C and SEC24D; mediates STX5 packaging into COPII-coated vesicles. Interacts with VLDLR; this interaction mediates VLDLR translocation from the endoplasmic reticulum to the plasma membrane. In terms of tissue distribution, expressed in the brain, heart, spleen, lung, liver, kidney and testis.

The protein resides in the endoplasmic reticulum-Golgi intermediate compartment membrane. The protein localises to the golgi apparatus membrane. In terms of biological role, mediates endoplasmic reticulum to Golgi transport. Together with p115/USO1 and GM130/GOLGA2, involved in vesicle tethering and fusion at the cis-Golgi membrane to maintain the stacked and inter-connected structure of the Golgi apparatus. Functionally, required for Golgi to endoplasmic reticulum retrogade transport, and for intra-Golgi transport. The chain is Syntaxin-5 (Stx5) from Rattus norvegicus (Rat).